The chain runs to 289 residues: Phycobilisome 39 kDa linker polypeptide, phycocyanin-associated, rod (289 aa).

The 179-residue stretch at 2–180 (PITSAASRLG…LYRGYANSDR (179 aa)) folds into the PBS-linker domain. Residues 213 to 233 (SYLPSKQGTAPSRTFGRSSQG) form a disordered region. Residues 216-233 (PSKQGTAPSRTFGRSSQG) show a composition bias toward polar residues. In terms of domain architecture, CpcD-like spans 236-288 (PRLYRIEVTGISLPRYPKVRRSNKEFIVPYEQLSSTLQQINKLGGKVASITFA).

Belongs to the phycobilisome linker protein family.

The protein resides in the cellular thylakoid membrane. In terms of biological role, rod linker protein, associated with phycocyanin. Linker polypeptides determine the state of aggregation and the location of the disk-shaped phycobiliprotein units within the phycobilisome and modulate their spectroscopic properties in order to mediate a directed and optimal energy transfer. In Microchaete diplosiphon (Fremyella diplosiphon), this protein is Phycobilisome 39 kDa linker polypeptide, phycocyanin-associated, rod (cpcI2).